The sequence spans 418 residues: Actin-like protein C08B11.6 (418 aa).

The protein belongs to the actin family. ARP6 subfamily.

The protein resides in the cytoplasm. It localises to the cytoskeleton. The protein is Actin-like protein C08B11.6 (arp-6) of Caenorhabditis elegans.